A 622-amino-acid chain; its full sequence is Chaperone protein HtpG (622 aa).

The a; substrate-binding stretch occupies residues 1–334 (MKGQETRGFQ…SNDLPLNVSR (334 aa)). Positions 335–550 (EILQDSRITQ…ADEMSTQMAK (216 aa)) are b. The interval 551–622 (LFAAAGQQAP…IRRMNQLLTA (72 aa)) is c.

Belongs to the heat shock protein 90 family. Homodimer.

It is found in the cytoplasm. In terms of biological role, molecular chaperone. Has ATPase activity. This chain is Chaperone protein HtpG, found in Yersinia pestis.